We begin with the raw amino-acid sequence, 277 residues long: Inositol monophosphatase 1 (277 aa).

Mg(2+) is bound by residues Glu-70, Asp-90, Ile-92, and Asp-93. Substrate contacts are provided by residues Glu-70, 90 to 95 (DPIDGT), 194 to 196 (GTA), Glu-213, and Asp-220. Mg(2+) is bound at residue Asp-220.

This sequence belongs to the inositol monophosphatase superfamily. Homodimer. Mg(2+) serves as cofactor. Mostly expressed in brain, small intestine, testis, kidney, and spleen (at protein level).

It localises to the cytoplasm. The enzyme catalyses a myo-inositol phosphate + H2O = myo-inositol + phosphate. The catalysed reaction is 1D-myo-inositol 1-phosphate + H2O = myo-inositol + phosphate. It carries out the reaction 1D-myo-inositol 2-phosphate + H2O = myo-inositol + phosphate. It catalyses the reaction 1D-myo-inositol 3-phosphate + H2O = myo-inositol + phosphate. The enzyme catalyses 1D-myo-inositol 4-phosphate + H2O = myo-inositol + phosphate. The catalysed reaction is 1D-myo-inositol 5-phosphate + H2O = myo-inositol + phosphate. It carries out the reaction 1D-myo-inositol 6-phosphate + H2O = myo-inositol + phosphate. It catalyses the reaction scyllo-inositol 1-phosphate + H2O = scyllo-inositol + phosphate. The enzyme catalyses alpha-D-galactose 1-phosphate + H2O = D-galactose + phosphate. The catalysed reaction is alpha-D-glucose 1-phosphate + H2O = D-glucose + phosphate. It carries out the reaction D-glucose 6-phosphate + H2O = D-glucose + phosphate. It catalyses the reaction beta-D-fructose 1-phosphate + H2O = D-fructose + phosphate. The enzyme catalyses glycerol 2-phosphate + H2O = glycerol + phosphate. The catalysed reaction is adenosine 2'-phosphate + H2O = adenosine + phosphate. It functions in the pathway polyol metabolism; myo-inositol biosynthesis; myo-inositol from D-glucose 6-phosphate: step 2/2. With respect to regulation, inhibited by Li(+), Ca(2+) and Mn(2+), but also by Mg(2+) at concentrations above 3 mM. Its function is as follows. Phosphatase involved in the dephosphorylation of myo-inositol monophosphate to generate myo-inositol. Is also able to dephosphorylate scyllo-inositol-phosphate, myo-inositol 1,4-diphosphate, scyllo-inositol-1,3-diphosphate and scyllo-inositol-1,4-diphosphate. Also dephosphorylates in vitro other sugar-phosphates including D-galactose-1-phosphate, glucose-1-phosphate, glucose-6-phosphate, fructose-1-phosphate, beta-glycerophosphate and 2'-AMP. Responsible for the provision of inositol required for synthesis of phosphatidylinositol and polyphosphoinositides, and involved in maintaining normal brain function. Has been implicated as the pharmacological target for lithium Li(+) action in brain. The polypeptide is Inositol monophosphatase 1 (Impa1) (Mus musculus (Mouse)).